The following is a 341-amino-acid chain: MTVRVAVAGASGYAGGEVVRLLLGHPAESWVALTAFSQAGQAVGHPHLGPVAGRVFEPISAQAPLAGHDVVFLALPPAQSAALAEEAGARVVDRNMGADFRLRDAGVWERFYGSPWRGCWPYGLPESPGAREALAGARRIAVPGCYPTAVTLALFPAVGAGLVDREVVTAVSGTSGAGRALKPHLLGAEVMGSVSPYAVGGTHRHTPEIAQNSTAVTDGEPVSVSFTPLLAPMPRGILATCSARLTPGTDARQVRAVYEKTYADEPFVSLLPEGVWPSTGAVLGSNQVQVQVAVDPAADRLVVVSAIDNLTKGTAGGALQSMNLALGLPETTGLPRTGLAP.

The active site involves Cys-145.

The protein belongs to the NAGSA dehydrogenase family. Type 1 subfamily.

The protein localises to the cytoplasm. It carries out the reaction N-acetyl-L-glutamate 5-semialdehyde + phosphate + NADP(+) = N-acetyl-L-glutamyl 5-phosphate + NADPH + H(+). Its pathway is amino-acid biosynthesis; L-arginine biosynthesis; N(2)-acetyl-L-ornithine from L-glutamate: step 3/4. Functionally, catalyzes the NADPH-dependent reduction of N-acetyl-5-glutamyl phosphate to yield N-acetyl-L-glutamate 5-semialdehyde. The protein is N-acetyl-gamma-glutamyl-phosphate reductase of Streptomyces clavuligerus.